Here is a 196-residue protein sequence, read N- to C-terminus: Protein GrpE (196 aa).

A disordered region spans residues 1–40 (MSSKEQKTPEGQAPEEIIMDQHEEVEAVEPNDSAEQVDPR).

It belongs to the GrpE family. As to quaternary structure, homodimer.

It is found in the cytoplasm. Functionally, participates actively in the response to hyperosmotic and heat shock by preventing the aggregation of stress-denatured proteins, in association with DnaK and GrpE. It is the nucleotide exchange factor for DnaK and may function as a thermosensor. Unfolded proteins bind initially to DnaJ; upon interaction with the DnaJ-bound protein, DnaK hydrolyzes its bound ATP, resulting in the formation of a stable complex. GrpE releases ADP from DnaK; ATP binding to DnaK triggers the release of the substrate protein, thus completing the reaction cycle. Several rounds of ATP-dependent interactions between DnaJ, DnaK and GrpE are required for fully efficient folding. In Salmonella enteritidis PT4 (strain P125109), this protein is Protein GrpE.